Here is a 61-residue protein sequence, read N- to C-terminus: Metallothionein-1H (61 aa).

M1 is subject to N-acetylmethionine. The beta stretch occupies residues 1-29 (MDPNCSCEAGGSCACAGSCKCKKCKCTSC). Residues C5, C7, C13, C15, C19, C21, C24, C26, C29, C33, C34, C36, C37, C41, C44, C48, C50, and C57 each coordinate a divalent metal cation. Positions 30 to 61 (KKSCCSCCPLGCAKCAQGCICKGASEKCSCCA) are alpha. S58 carries the post-translational modification Phosphoserine. A divalent metal cation contacts are provided by C59 and C60.

This sequence belongs to the metallothionein superfamily. Type 1 family. As to quaternary structure, monomer.

In terms of biological role, metallothioneins have a high content of cysteine residues that bind various heavy metals; these proteins are transcriptionally regulated by both heavy metals and glucocorticoids. The sequence is that of Metallothionein-1H (MT1H) from Homo sapiens (Human).